We begin with the raw amino-acid sequence, 292 residues long: Undecaprenyl-diphosphatase (292 aa).

The next 7 membrane-spanning stretches (helical) occupy residues 1 to 21 (MSLV…FLPV), 46 to 66 (FVTI…RADI), 88 to 108 (ARLG…GKLL), 114 to 134 (ALGN…LLAA), 192 to 212 (FLLS…STVP), 225 to 245 (VVGT…LLAW), and 253 to 273 (VFVV…LSGV).

This sequence belongs to the UppP family.

It localises to the cell inner membrane. The catalysed reaction is di-trans,octa-cis-undecaprenyl diphosphate + H2O = di-trans,octa-cis-undecaprenyl phosphate + phosphate + H(+). Its function is as follows. Catalyzes the dephosphorylation of undecaprenyl diphosphate (UPP). Confers resistance to bacitracin. This Anaeromyxobacter dehalogenans (strain 2CP-C) protein is Undecaprenyl-diphosphatase.